We begin with the raw amino-acid sequence, 998 residues long: Regulator of telomere elongation helicase 1 homolog (998 aa).

The Helicase ATP-binding domain occupies 7–324; it reads AGIPVHFPFE…KEMLLELEKA (318 aa). Residue 42–49 coordinates ATP; that stretch reads SPTGTGKT. [4Fe-4S] cluster contacts are provided by Cys148, Cys166, Cys175, and Cys211. The DEAH box signature appears at 254 to 257; the sequence is DEAH. The segment at 426–454 is disordered; sequence QNAGKPAPKQQQQGGWLGKGNNTSNSSSS. Thr887 is modified (phosphothreonine).

This sequence belongs to the helicase family. RAD3/XPD subfamily.

The protein localises to the nucleus. It catalyses the reaction ATP + H2O = ADP + phosphate + H(+). In terms of biological role, a probable ATP-dependent DNA helicase implicated in DNA repair and the maintenance of genomic stability. Acts as an anti-recombinase to counteract toxic recombination and limit crossover during meiosis. Regulates meiotic recombination and crossover homeostasis by physically dissociating strand invasion events and thereby promotes noncrossover repair by meiotic synthesis dependent strand annealing (SDSA) as well as disassembly of D loop recombination intermediates. The sequence is that of Regulator of telomere elongation helicase 1 homolog from Drosophila willistoni (Fruit fly).